Reading from the N-terminus, the 417-residue chain is Sulfate adenylyltransferase (417 aa).

Over residues 1 to 10 (MTSITANQKP) the composition is skewed to polar residues. The disordered stretch occupies residues 1 to 20 (MTSITANQKPSKLVPPHGSP).

It belongs to the sulfate adenylyltransferase family.

It carries out the reaction sulfate + ATP + H(+) = adenosine 5'-phosphosulfate + diphosphate. It functions in the pathway sulfur metabolism; hydrogen sulfide biosynthesis; sulfite from sulfate: step 1/3. The protein is Sulfate adenylyltransferase of Psychrobacter arcticus (strain DSM 17307 / VKM B-2377 / 273-4).